Reading from the N-terminus, the 141-residue chain is Hemoglobin subunit alpha-D (141 aa).

Positions 1–141 (VLTAEDKKLI…VAAVLAEKYR (141 aa)) constitute a Globin domain. Heme b contacts are provided by His58 and His87.

It belongs to the globin family. As to quaternary structure, heterotetramer of two alpha-D chains and two beta chains. As to expression, red blood cells.

In terms of biological role, involved in oxygen transport from the lung to the various peripheral tissues. This Sturnus vulgaris (Starling) protein is Hemoglobin subunit alpha-D (HBAD).